A 301-amino-acid chain; its full sequence is Indole-3-glycerol phosphate synthase (301 aa).

Belongs to the TrpC family.

It carries out the reaction 1-(2-carboxyphenylamino)-1-deoxy-D-ribulose 5-phosphate + H(+) = (1S,2R)-1-C-(indol-3-yl)glycerol 3-phosphate + CO2 + H2O. It participates in amino-acid biosynthesis; L-tryptophan biosynthesis; L-tryptophan from chorismate: step 4/5. The chain is Indole-3-glycerol phosphate synthase from Prochlorococcus marinus (strain MIT 9313).